The sequence spans 202 residues: Solute carrier family 66 member 3 (202 aa).

The N-terminal stretch at 1–19 (MEAALLGLCNWSTLGVCAA) is a signal peptide. The next 4 helical transmembrane spans lie at 33–53 (SARG…LVFL), 64–84 (LTYL…LCIF), 97–117 (IAVL…IDLA), and 171–191 (FTIL…TVTV).

It is found in the membrane. This is Solute carrier family 66 member 3 from Homo sapiens (Human).